Consider the following 95-residue polypeptide: Co-chaperonin GroES (95 aa).

The protein belongs to the GroES chaperonin family. Heptamer of 7 subunits arranged in a ring. Interacts with the chaperonin GroEL.

The protein localises to the cytoplasm. Together with the chaperonin GroEL, plays an essential role in assisting protein folding. The GroEL-GroES system forms a nano-cage that allows encapsulation of the non-native substrate proteins and provides a physical environment optimized to promote and accelerate protein folding. GroES binds to the apical surface of the GroEL ring, thereby capping the opening of the GroEL channel. This is Co-chaperonin GroES from Chlorobium phaeovibrioides (strain DSM 265 / 1930) (Prosthecochloris vibrioformis (strain DSM 265)).